A 79-amino-acid polypeptide reads, in one-letter code: MFSGISIWQLLILLAIVVLLFGTKKLRNIGGDLGGAVKGFKSAMKDGEDEQDHKRLADDDQPQNKQDAEQKAEQEKDKA.

Residues 1–21 form a helical membrane-spanning segment; that stretch reads MFSGISIWQLLILLAIVVLLF. Basic and acidic residues-rich tracts occupy residues 44–58 and 66–79; these read MKDGEDEQDHKRLAD and QDAEQKAEQEKDKA. The segment at 44–79 is disordered; it reads MKDGEDEQDHKRLADDDQPQNKQDAEQKAEQEKDKA.

Belongs to the TatA/E family. The Tat system comprises two distinct complexes: a TatABC complex, containing multiple copies of TatA, TatB and TatC subunits, and a separate TatA complex, containing only TatA subunits. Substrates initially bind to the TatABC complex, which probably triggers association of the separate TatA complex to form the active translocon.

The protein resides in the cell inner membrane. Functionally, part of the twin-arginine translocation (Tat) system that transports large folded proteins containing a characteristic twin-arginine motif in their signal peptide across membranes. TatA could form the protein-conducting channel of the Tat system. This Alcanivorax borkumensis (strain ATCC 700651 / DSM 11573 / NCIMB 13689 / SK2) protein is Sec-independent protein translocase protein TatA.